Here is a 215-residue protein sequence, read N- to C-terminus: Probable GTP-binding protein EngB (215 aa).

The region spanning 26-200 (EGIEVAFAGR…RAKLDEWFAP (175 aa)) is the EngB-type G domain. Residues 34-41 (GRSNAGKS), 61-65 (GRTQL), 79-82 (DLPG), 146-149 (TKAD), and 179-181 (FSS) contribute to the GTP site. Residues Ser41 and Thr63 each coordinate Mg(2+).

This sequence belongs to the TRAFAC class TrmE-Era-EngA-EngB-Septin-like GTPase superfamily. EngB GTPase family. Requires Mg(2+) as cofactor.

Its function is as follows. Necessary for normal cell division and for the maintenance of normal septation. The sequence is that of Probable GTP-binding protein EngB from Aliivibrio fischeri (strain ATCC 700601 / ES114) (Vibrio fischeri).